We begin with the raw amino-acid sequence, 384 residues long: N-acetyldiaminopimelate deacetylase (384 aa).

The active site involves Asp-74. Glu-133 serves as the catalytic Proton acceptor.

It belongs to the peptidase M20A family. N-acetyldiaminopimelate deacetylase subfamily.

It catalyses the reaction N-acetyl-(2S,6S)-2,6-diaminopimelate + H2O = (2S,6S)-2,6-diaminopimelate + acetate. The protein operates within amino-acid biosynthesis; L-lysine biosynthesis via DAP pathway; LL-2,6-diaminopimelate from (S)-tetrahydrodipicolinate (acetylase route): step 3/3. Functionally, catalyzes the conversion of N-acetyl-diaminopimelate to diaminopimelate and acetate. This Pediococcus pentosaceus (strain ATCC 25745 / CCUG 21536 / LMG 10740 / 183-1w) protein is N-acetyldiaminopimelate deacetylase.